Consider the following 414-residue polypeptide: Gamma-glutamyl phosphate reductase (414 aa).

Belongs to the gamma-glutamyl phosphate reductase family.

Its subcellular location is the cytoplasm. It catalyses the reaction L-glutamate 5-semialdehyde + phosphate + NADP(+) = L-glutamyl 5-phosphate + NADPH + H(+). The protein operates within amino-acid biosynthesis; L-proline biosynthesis; L-glutamate 5-semialdehyde from L-glutamate: step 2/2. Its function is as follows. Catalyzes the NADPH-dependent reduction of L-glutamate 5-phosphate into L-glutamate 5-semialdehyde and phosphate. The product spontaneously undergoes cyclization to form 1-pyrroline-5-carboxylate. The sequence is that of Gamma-glutamyl phosphate reductase from Xanthomonas campestris pv. campestris (strain ATCC 33913 / DSM 3586 / NCPPB 528 / LMG 568 / P 25).